The following is a 288-amino-acid chain: F420-non-reducing hydrogenase vhu subunit G (288 aa).

The protein belongs to the [NiFe]/[NiFeSe] hydrogenase small subunit family. In terms of assembly, the F420-non-reducing hydrogenase vhu is composed of four subunits; VhuA, VhuD, VhuG and VhuU.

The chain is F420-non-reducing hydrogenase vhu subunit G (vhuG) from Methanocaldococcus jannaschii (strain ATCC 43067 / DSM 2661 / JAL-1 / JCM 10045 / NBRC 100440) (Methanococcus jannaschii).